Reading from the N-terminus, the 213-residue chain is MPPRALLLVDLQNDFCAGGALAVPEGDSTVDVANRLIDWCQSRGEAVIASQDWHPANHGSFASQHGVEPYTPGQLDGLPQTFWPDHCVQNSEGAQLHPLLHQKAIAAVFHKGENPLVDSYSAFFDNGRRQKTSLDDWLRDHEIDELIVMGLATDYCVKFTVLDALQLGYKVNVITDGCRGVNIQPQDSAHAFMEMSAAGATLYTLADWEETQG.

The active-site Proton acceptor is Asp10. Residues Asp52, His54, and His86 each coordinate Zn(2+). Residue Lys111 is part of the active site. Catalysis depends on Cys156, which acts as the Nucleophile.

This sequence belongs to the isochorismatase family.

The catalysed reaction is nicotinamide + H2O = nicotinate + NH4(+). It carries out the reaction pyrazinamide + H2O = pyrazine-2-carboxylate + NH4(+). It participates in cofactor biosynthesis; nicotinate biosynthesis; nicotinate from nicotinamide: step 1/1. In terms of biological role, catalyzes the deamidation of nicotinamide (NAM) into nicotinate. Likely functions in the cyclical salvage pathway for production of NAD from nicotinamide. Is also able to hydrolyze the first-line antituberculous drug pyrazinamide (PZA) into pyrazinoic acid in vitro, but this reaction is not considered to be physiologically relevant. The sequence is that of Nicotinamidase from Escherichia coli (strain K12).